Consider the following 483-residue polypeptide: Sphingomyelin phosphodiesterase 5 (483 aa).

A disordered region spans residues 1-20 (MSLPDISRRRSPVPQEDWPL). A helical membrane pass occupies residues 80 to 100 (VLLPLVVVGLPLALVGLALWL). A Mg(2+)-binding site is contributed by Glu-209. The active-site Proton acceptor is the His-471.

This sequence belongs to the neutral sphingomyelinase family. Mg(2+) serves as cofactor. Requires Mn(2+) as cofactor. In terms of tissue distribution, highly expressed in testis, pancreas, epididymis, and brain.

The protein resides in the mitochondrion inner membrane. It is found in the endoplasmic reticulum membrane. It carries out the reaction a sphingomyelin + H2O = phosphocholine + an N-acylsphing-4-enine + H(+). The catalysed reaction is N-(hexadecanoyl)-sphing-4-enine-1-phosphocholine + H2O = N-hexadecanoylsphing-4-enine + phosphocholine + H(+). It functions in the pathway lipid metabolism; sphingolipid metabolism. Activated by anionic phospholipids, specially cardiolipin and phosphatidylserine. In terms of biological role, catalyzes the hydrolysis of membrane sphingomyelin to form phosphorylcholine and ceramide. In Mus musculus (Mouse), this protein is Sphingomyelin phosphodiesterase 5.